The following is a 218-amino-acid chain: tRNA (guanine-N(7)-)-methyltransferase (218 aa).

Positions 45, 70, 97, and 119 each coordinate S-adenosyl-L-methionine. The active site involves Asp-119. Lys-123 provides a ligand contact to substrate. Residues 125-130 (RHEKRR) form an interaction with RNA region. Residues Asp-155 and 195–198 (TEYE) contribute to the substrate site.

Belongs to the class I-like SAM-binding methyltransferase superfamily. TrmB family.

It catalyses the reaction guanosine(46) in tRNA + S-adenosyl-L-methionine = N(7)-methylguanosine(46) in tRNA + S-adenosyl-L-homocysteine. The protein operates within tRNA modification; N(7)-methylguanine-tRNA biosynthesis. Its function is as follows. Catalyzes the formation of N(7)-methylguanine at position 46 (m7G46) in tRNA. This Lactobacillus acidophilus (strain ATCC 700396 / NCK56 / N2 / NCFM) protein is tRNA (guanine-N(7)-)-methyltransferase.